The primary structure comprises 202 residues: NADH-quinone oxidoreductase subunit C (202 aa).

This sequence belongs to the complex I 30 kDa subunit family. As to quaternary structure, NDH-1 is composed of 14 different subunits. Subunits NuoB, C, D, E, F, and G constitute the peripheral sector of the complex.

It is found in the cell inner membrane. The enzyme catalyses a quinone + NADH + 5 H(+)(in) = a quinol + NAD(+) + 4 H(+)(out). Functionally, NDH-1 shuttles electrons from NADH, via FMN and iron-sulfur (Fe-S) centers, to quinones in the respiratory chain. The immediate electron acceptor for the enzyme in this species is believed to be ubiquinone. Couples the redox reaction to proton translocation (for every two electrons transferred, four hydrogen ions are translocated across the cytoplasmic membrane), and thus conserves the redox energy in a proton gradient. This chain is NADH-quinone oxidoreductase subunit C, found in Albidiferax ferrireducens (strain ATCC BAA-621 / DSM 15236 / T118) (Rhodoferax ferrireducens).